The sequence spans 813 residues: Leucine--tRNA ligase (813 aa).

Positions 41–51 (PYPSGTLHMGH) match the 'HIGH' region motif. Positions 575 to 579 (KMSKS) match the 'KMSKS' region motif. Residue K578 coordinates ATP.

The protein belongs to the class-I aminoacyl-tRNA synthetase family.

It is found in the cytoplasm. The enzyme catalyses tRNA(Leu) + L-leucine + ATP = L-leucyl-tRNA(Leu) + AMP + diphosphate. This chain is Leucine--tRNA ligase, found in Francisella tularensis subsp. tularensis (strain WY96-3418).